Here is a 171-residue protein sequence, read N- to C-terminus: 3-hydroxydecanoyl-[acyl-carrier-protein] dehydratase (171 aa).

Histidine 70 is a catalytic residue.

It belongs to the thioester dehydratase family. FabA subfamily. Homodimer.

Its subcellular location is the cytoplasm. It carries out the reaction a (3R)-hydroxyacyl-[ACP] = a (2E)-enoyl-[ACP] + H2O. The catalysed reaction is (3R)-hydroxydecanoyl-[ACP] = (2E)-decenoyl-[ACP] + H2O. It catalyses the reaction (2E)-decenoyl-[ACP] = (3Z)-decenoyl-[ACP]. The protein operates within lipid metabolism; fatty acid biosynthesis. Necessary for the introduction of cis unsaturation into fatty acids. Catalyzes the dehydration of (3R)-3-hydroxydecanoyl-ACP to E-(2)-decenoyl-ACP and then its isomerization to Z-(3)-decenoyl-ACP. Can catalyze the dehydratase reaction for beta-hydroxyacyl-ACPs with saturated chain lengths up to 16:0, being most active on intermediate chain length. The polypeptide is 3-hydroxydecanoyl-[acyl-carrier-protein] dehydratase (Xanthomonas axonopodis pv. citri (strain 306)).